A 233-amino-acid polypeptide reads, in one-letter code: Purine nucleoside phosphorylase DeoD-type (233 aa).

His-4 serves as a coordination point for a purine D-ribonucleoside. Residues Gly-20, Arg-24, Arg-43, and Arg-87 to Thr-90 each bind phosphate. A purine D-ribonucleoside-binding positions include Glu-178 to Glu-180 and Ser-202 to Asp-203. The Proton donor role is filled by Asp-203.

It belongs to the PNP/UDP phosphorylase family. As to quaternary structure, homohexamer; trimer of homodimers.

The catalysed reaction is a purine D-ribonucleoside + phosphate = a purine nucleobase + alpha-D-ribose 1-phosphate. It carries out the reaction a purine 2'-deoxy-D-ribonucleoside + phosphate = a purine nucleobase + 2-deoxy-alpha-D-ribose 1-phosphate. Catalyzes the reversible phosphorolytic breakdown of the N-glycosidic bond in the beta-(deoxy)ribonucleoside molecules, with the formation of the corresponding free purine bases and pentose-1-phosphate. The chain is Purine nucleoside phosphorylase DeoD-type from Listeria innocua serovar 6a (strain ATCC BAA-680 / CLIP 11262).